Here is a 318-residue protein sequence, read N- to C-terminus: ATP synthase gamma chain (318 aa).

Belongs to the ATPase gamma chain family. F-type ATPases have 2 components, CF(1) - the catalytic core - and CF(0) - the membrane proton channel. CF(1) has five subunits: alpha(3), beta(3), gamma(1), delta(1), epsilon(1). CF(0) has three main subunits: a, b and c.

Its subcellular location is the cell membrane. Its function is as follows. Produces ATP from ADP in the presence of a proton gradient across the membrane. The gamma chain is believed to be important in regulating ATPase activity and the flow of protons through the CF(0) complex. This chain is ATP synthase gamma chain, found in Lactobacillus johnsonii (strain CNCM I-12250 / La1 / NCC 533).